A 313-amino-acid chain; its full sequence is E3 ubiquitin-protein ligase SGIP1 (313 aa).

The F-box domain maps to 16-65 (REYSKEIPIDLLIEIFSRLSTGDIARCRCVSKIWSSVPRLRDFTELFLKI).

In terms of assembly, interacts with SGS3 in cytoplasmic granules.

The protein resides in the cytoplasmic granule. It catalyses the reaction S-ubiquitinyl-[E2 ubiquitin-conjugating enzyme]-L-cysteine + [acceptor protein]-L-lysine = [E2 ubiquitin-conjugating enzyme]-L-cysteine + N(6)-ubiquitinyl-[acceptor protein]-L-lysine.. It functions in the pathway protein degradation; proteasomal ubiquitin-dependent pathway. It participates in protein modification; protein ubiquitination. E3 ubiquitin-protein ligase which triggers the ubiquitination and subsequent degradation of SGS3 in response to heat. Involved in the mechanisms necessary for quick response to heat and subsequent heritable transgenerational memory of heat acclimation (global warming) such as early flowering and attenuated immunity; this process includes epigenetic regulation as well as post-transcriptional gene silencing (PTGS). In response to heat, HSFA2 is activated and promotes the expression of REF6 which in turn derepresses HSFA2, thus establishing an inheritable feedback loop able to trigger SGIP1 and subsequent SGIP1-mediated SGS3 degradation; this prevents the biosynthesis of trans-acting siRNA (tasiRNA) and leads to the release of HTT5, which drives early flowering but attenuates immunity. The chain is E3 ubiquitin-protein ligase SGIP1 from Arabidopsis thaliana (Mouse-ear cress).